We begin with the raw amino-acid sequence, 319 residues long: Malate dehydrogenase (319 aa).

NAD(+) contacts are provided by residues 10–15 (GAGNIG) and Asp-34. Substrate-binding residues include Arg-83 and Arg-89. Residues Asn-96 and 119 to 121 (ITN) contribute to the NAD(+) site. The substrate site is built by Asn-121 and Arg-152. The active-site Proton acceptor is the His-176.

The protein belongs to the LDH/MDH superfamily. MDH type 3 family.

It carries out the reaction (S)-malate + NAD(+) = oxaloacetate + NADH + H(+). Its function is as follows. Catalyzes the reversible oxidation of malate to oxaloacetate. The protein is Malate dehydrogenase of Francisella novicida.